The chain runs to 195 residues: Ribosome maturation factor RimM (195 aa).

One can recognise a PRC barrel domain in the interval 101 to 191 (ADEWYPKDLI…YLTLDPPGGL (91 aa)).

It belongs to the RimM family. As to quaternary structure, binds ribosomal protein uS19.

The protein resides in the cytoplasm. Functionally, an accessory protein needed during the final step in the assembly of 30S ribosomal subunit, possibly for assembly of the head region. Essential for efficient processing of 16S rRNA. May be needed both before and after RbfA during the maturation of 16S rRNA. It has affinity for free ribosomal 30S subunits but not for 70S ribosomes. This Bifidobacterium adolescentis (strain ATCC 15703 / DSM 20083 / NCTC 11814 / E194a) protein is Ribosome maturation factor RimM.